We begin with the raw amino-acid sequence, 505 residues long: ATP nucleosidase Cap17 (505 aa).

Residues methionine 1–leucine 229 are cyclic oligonucleotide sensing-domain. Residues leucine 239–alanine 505 are purine nucleoside phosphorylase domain.

It belongs to the Cap17 family.

It carries out the reaction ATP + H2O = D-ribose 5-triphosphate + adenine. The catalysed reaction is dATP + H2O = 2-deoxyribose 5-triphosphate + adenine. Effector protein with (d)ATP degrading activity of a CBASS antivirus system. CBASS (cyclic oligonucleotide-based antiphage signaling system) provides immunity against bacteriophage. A CD-NTase protein synthesizes cyclic nucleotides in response to infection; these serve as specific second messenger signals. The signals activate a diverse range of effectors, leading to bacterial cell death and thus abortive phage infection. A type III CBASS system. Expression of this CBASS system (Cap18-Cap6-Cap7-CdnC-CapW-Cap17) in a susceptible E.coli (strain MG1655) confers resistance to bacteriophage P1, leading to cell lysis. By 50 minutes post-infection, ATP levels are markedly reduced while dATP has been eliminated. The C-terminal purine nucleoside phosphorylase (PNP) domain cleaves the N-glycosidic bond of (d)ATP to release adenine and a sugar triphosphate; has no activity on other (d)NTPs, nor on DNA or RNA. In vivo during phage infection has pleoitropic effects on nucleotide accumulation. This protein may be activated by the cognate CD-NTase (CdnC). The sequence is that of ATP nucleosidase Cap17 from Escherichia coli (strain KTE188).